The chain runs to 391 residues: Succinate--CoA ligase [ADP-forming] subunit beta (391 aa).

One can recognise an ATP-grasp domain in the interval 9–245 (KQIFAKYGVP…ISEEDADERE (237 aa)). Residues lysine 46, 53–55 (GRG), glutamate 99, alanine 102, and glutamate 107 each bind ATP. Positions 200 and 214 each coordinate Mg(2+). Residues asparagine 265 and 322–324 (GIV) each bind substrate.

This sequence belongs to the succinate/malate CoA ligase beta subunit family. In terms of assembly, heterotetramer of two alpha and two beta subunits. Mg(2+) is required as a cofactor.

The catalysed reaction is succinate + ATP + CoA = succinyl-CoA + ADP + phosphate. It carries out the reaction GTP + succinate + CoA = succinyl-CoA + GDP + phosphate. It participates in carbohydrate metabolism; tricarboxylic acid cycle; succinate from succinyl-CoA (ligase route): step 1/1. Functionally, succinyl-CoA synthetase functions in the citric acid cycle (TCA), coupling the hydrolysis of succinyl-CoA to the synthesis of either ATP or GTP and thus represents the only step of substrate-level phosphorylation in the TCA. The beta subunit provides nucleotide specificity of the enzyme and binds the substrate succinate, while the binding sites for coenzyme A and phosphate are found in the alpha subunit. The polypeptide is Succinate--CoA ligase [ADP-forming] subunit beta (Sulfurimonas denitrificans (strain ATCC 33889 / DSM 1251) (Thiomicrospira denitrificans (strain ATCC 33889 / DSM 1251))).